Here is a 467-residue protein sequence, read N- to C-terminus: Glycosyl hydrolase family 109 protein 1 (467 aa).

A signal peptide spans 1–22; the sequence is MKKLLLNTLIGLALLTCQTSFA. NAD(+) is bound by residues 66 to 67, D88, 137 to 140, 157 to 158, and N186; these read MR, WKHH, and EV. Substrate is bound by residues Y215, R231, 243 to 246, and Y321; that span reads YATH. Position 243 (Y243) interacts with NAD(+).

It belongs to the Gfo/Idh/MocA family. Glycosyl hydrolase 109 subfamily. The cofactor is NAD(+).

In terms of biological role, glycosidase. This Bacteroides thetaiotaomicron (strain ATCC 29148 / DSM 2079 / JCM 5827 / CCUG 10774 / NCTC 10582 / VPI-5482 / E50) protein is Glycosyl hydrolase family 109 protein 1.